Here is a 733-residue protein sequence, read N- to C-terminus: Phosphoribosylformylglycinamidine synthase subunit PurL (733 aa).

The active site involves H41. ATP-binding residues include Y44 and K83. E85 is a Mg(2+) binding site. Residues 86-89 (SHNH) and R108 each bind substrate. The Proton acceptor role is filled by H87. D109 provides a ligand contact to Mg(2+). The segment at 212-232 (GASFASQELSEESEEKRPSVQ) is disordered. Q232 is a substrate binding site. D260 is a binding site for Mg(2+). Residue 304-306 (ESQ) coordinates substrate. Positions 488 and 525 each coordinate ATP. N526 is a binding site for Mg(2+). S528 serves as a coordination point for substrate.

It belongs to the FGAMS family. In terms of assembly, monomer. Part of the FGAM synthase complex composed of 1 PurL, 1 PurQ and 2 PurS subunits.

The protein resides in the cytoplasm. It catalyses the reaction N(2)-formyl-N(1)-(5-phospho-beta-D-ribosyl)glycinamide + L-glutamine + ATP + H2O = 2-formamido-N(1)-(5-O-phospho-beta-D-ribosyl)acetamidine + L-glutamate + ADP + phosphate + H(+). The protein operates within purine metabolism; IMP biosynthesis via de novo pathway; 5-amino-1-(5-phospho-D-ribosyl)imidazole from N(2)-formyl-N(1)-(5-phospho-D-ribosyl)glycinamide: step 1/2. Functionally, part of the phosphoribosylformylglycinamidine synthase complex involved in the purines biosynthetic pathway. Catalyzes the ATP-dependent conversion of formylglycinamide ribonucleotide (FGAR) and glutamine to yield formylglycinamidine ribonucleotide (FGAM) and glutamate. The FGAM synthase complex is composed of three subunits. PurQ produces an ammonia molecule by converting glutamine to glutamate. PurL transfers the ammonia molecule to FGAR to form FGAM in an ATP-dependent manner. PurS interacts with PurQ and PurL and is thought to assist in the transfer of the ammonia molecule from PurQ to PurL. This chain is Phosphoribosylformylglycinamidine synthase subunit PurL, found in Thermoanaerobacter sp. (strain X514).